Reading from the N-terminus, the 231-residue chain is Deoxyribose-phosphate aldolase (231 aa).

Asp-97 acts as the Proton donor/acceptor in catalysis. Lys-162 functions as the Schiff-base intermediate with acetaldehyde in the catalytic mechanism. Lys-191 functions as the Proton donor/acceptor in the catalytic mechanism.

The protein belongs to the DeoC/FbaB aldolase family. DeoC type 1 subfamily.

It is found in the cytoplasm. It catalyses the reaction 2-deoxy-D-ribose 5-phosphate = D-glyceraldehyde 3-phosphate + acetaldehyde. The protein operates within carbohydrate degradation; 2-deoxy-D-ribose 1-phosphate degradation; D-glyceraldehyde 3-phosphate and acetaldehyde from 2-deoxy-alpha-D-ribose 1-phosphate: step 2/2. In terms of biological role, catalyzes a reversible aldol reaction between acetaldehyde and D-glyceraldehyde 3-phosphate to generate 2-deoxy-D-ribose 5-phosphate. This Caldanaerobacter subterraneus subsp. tengcongensis (strain DSM 15242 / JCM 11007 / NBRC 100824 / MB4) (Thermoanaerobacter tengcongensis) protein is Deoxyribose-phosphate aldolase.